The chain runs to 615 residues: UvrABC system protein C (615 aa).

The GIY-YIG domain occupies 12 to 91 (EKPGVYIMKD…IKKYKPKYNV (80 aa)). The UVR domain occupies 203 to 238 (DWLIQKLKEDMKKAAEELRFEEAARIRDQIFAIERT).

The protein belongs to the UvrC family. Interacts with UvrB in an incision complex.

The protein localises to the cytoplasm. The UvrABC repair system catalyzes the recognition and processing of DNA lesions. UvrC both incises the 5' and 3' sides of the lesion. The N-terminal half is responsible for the 3' incision and the C-terminal half is responsible for the 5' incision. The protein is UvrABC system protein C of Thermoanaerobacter pseudethanolicus (strain ATCC 33223 / 39E) (Clostridium thermohydrosulfuricum).